Here is a 90-residue protein sequence, read N- to C-terminus: Large ribosomal subunit protein eL34 (90 aa).

The disordered stretch occupies residues 38–65 (ARCGRPLGGVPRGRPPRVRRLSKTAKRP). Basic residues predominate over residues 51 to 62 (RPPRVRRLSKTA).

Belongs to the eukaryotic ribosomal protein eL34 family.

The protein is Large ribosomal subunit protein eL34 (rpl34e) of Aeropyrum pernix (strain ATCC 700893 / DSM 11879 / JCM 9820 / NBRC 100138 / K1).